Reading from the N-terminus, the 139-residue chain is Nucleoside diphosphate kinase (139 aa).

Residues Lys10, Phe58, Arg86, Thr92, Arg103, and Asn113 each contribute to the ATP site. His116 serves as the catalytic Pros-phosphohistidine intermediate.

It belongs to the NDK family. Homotetramer. The cofactor is Mg(2+).

It is found in the cytoplasm. It carries out the reaction a 2'-deoxyribonucleoside 5'-diphosphate + ATP = a 2'-deoxyribonucleoside 5'-triphosphate + ADP. The catalysed reaction is a ribonucleoside 5'-diphosphate + ATP = a ribonucleoside 5'-triphosphate + ADP. In terms of biological role, major role in the synthesis of nucleoside triphosphates other than ATP. The ATP gamma phosphate is transferred to the NDP beta phosphate via a ping-pong mechanism, using a phosphorylated active-site intermediate. The chain is Nucleoside diphosphate kinase from Caulobacter vibrioides (strain ATCC 19089 / CIP 103742 / CB 15) (Caulobacter crescentus).